The primary structure comprises 299 residues: Biotin transporter (299 aa).

A run of 10 helical transmembrane segments spans residues 2-22 (ALLIITTILWAFSFSLFGEYL), 26-46 (VDSYFAVLIRVGLAALVFLPF), 56-76 (TISLYMLVGAMQLGIMYMLSF), 81-101 (YLTVSELLLFTVLTPLYITLI), 110-130 (LRWGYAFSALLAVIGAGIIRY), 137-157 (FWVGLLLVQLSNISFAIGMVG), 172-192 (AFAWFYLGAFLVAAVAWSLLG), 202-222 (LQWSILVFLGVVASGIGYFMW), 233-253 (TLGIMNNMHVPAGLLVNLAIW), and 256-276 (QPHWPSFITGAAVILASLWVH). EamA domains lie at 3–128 (LLII…AGII) and 139–274 (VGLL…ASLW).

The protein belongs to the drug/metabolite transporter (DMT) superfamily. 10 TMS drug/metabolite exporter (DME) (TC 2.A.7.3) family.

It is found in the cell inner membrane. The catalysed reaction is biotin(in) = biotin(out). In terms of biological role, uptake of biotin. This Salmonella typhi protein is Biotin transporter.